Reading from the N-terminus, the 156-residue chain is Small ribosomal subunit protein uS7 (156 aa).

It belongs to the universal ribosomal protein uS7 family. Part of the 30S ribosomal subunit. Contacts proteins S9 and S11.

Its function is as follows. One of the primary rRNA binding proteins, it binds directly to 16S rRNA where it nucleates assembly of the head domain of the 30S subunit. Is located at the subunit interface close to the decoding center, probably blocks exit of the E-site tRNA. This chain is Small ribosomal subunit protein uS7, found in Macrococcus caseolyticus (strain JCSC5402) (Macrococcoides caseolyticum).